We begin with the raw amino-acid sequence, 288 residues long: Acetyl-coenzyme A carboxylase carboxyl transferase subunit beta (288 aa).

The region spanning 34 to 288 is the CoA carboxyltransferase N-terminal domain; the sequence is LWVKCSRCNE…ANILSLHGTN (255 aa). Zn(2+) contacts are provided by Cys38, Cys41, Cys57, and Cys60. The C4-type zinc-finger motif lies at 38–60; it reads CSRCNEILYTKELDKNFKVCHKC.

It belongs to the AccD/PCCB family. As to quaternary structure, acetyl-CoA carboxylase is a heterohexamer composed of biotin carboxyl carrier protein (AccB), biotin carboxylase (AccC) and two subunits each of ACCase subunit alpha (AccA) and ACCase subunit beta (AccD). Zn(2+) is required as a cofactor.

Its subcellular location is the cytoplasm. It catalyses the reaction N(6)-carboxybiotinyl-L-lysyl-[protein] + acetyl-CoA = N(6)-biotinyl-L-lysyl-[protein] + malonyl-CoA. Its pathway is lipid metabolism; malonyl-CoA biosynthesis; malonyl-CoA from acetyl-CoA: step 1/1. Functionally, component of the acetyl coenzyme A carboxylase (ACC) complex. Biotin carboxylase (BC) catalyzes the carboxylation of biotin on its carrier protein (BCCP) and then the CO(2) group is transferred by the transcarboxylase to acetyl-CoA to form malonyl-CoA. The sequence is that of Acetyl-coenzyme A carboxylase carboxyl transferase subunit beta from Desulforamulus reducens (strain ATCC BAA-1160 / DSM 100696 / MI-1) (Desulfotomaculum reducens).